The primary structure comprises 174 residues: Ribosome maturation factor RimM (174 aa).

Positions A98 to L172 constitute a PRC barrel domain.

This sequence belongs to the RimM family. In terms of assembly, binds ribosomal protein uS19.

It is found in the cytoplasm. Functionally, an accessory protein needed during the final step in the assembly of 30S ribosomal subunit, possibly for assembly of the head region. Essential for efficient processing of 16S rRNA. May be needed both before and after RbfA during the maturation of 16S rRNA. It has affinity for free ribosomal 30S subunits but not for 70S ribosomes. This is Ribosome maturation factor RimM from Lactiplantibacillus plantarum (strain ATCC BAA-793 / NCIMB 8826 / WCFS1) (Lactobacillus plantarum).